Here is a 227-residue protein sequence, read N- to C-terminus: Ribose-5-phosphate isomerase A (227 aa).

Residues 26 to 29 (TGST), 82 to 85 (DGAD), and 95 to 98 (KGGG) contribute to the substrate site. The Proton acceptor role is filled by Glu104. Lys122 lines the substrate pocket.

This sequence belongs to the ribose 5-phosphate isomerase family. In terms of assembly, homodimer.

The enzyme catalyses aldehydo-D-ribose 5-phosphate = D-ribulose 5-phosphate. Its pathway is carbohydrate degradation; pentose phosphate pathway; D-ribose 5-phosphate from D-ribulose 5-phosphate (non-oxidative stage): step 1/1. Functionally, catalyzes the reversible conversion of ribose-5-phosphate to ribulose 5-phosphate. The polypeptide is Ribose-5-phosphate isomerase A (Streptococcus pneumoniae (strain ATCC 700669 / Spain 23F-1)).